A 135-amino-acid polypeptide reads, in one-letter code: UPF0102 protein Mjls_1965 (135 aa).

The protein belongs to the UPF0102 family.

The protein is UPF0102 protein Mjls_1965 of Mycobacterium sp. (strain JLS).